The primary structure comprises 201 residues: Ras-related protein Rab-1B (201 aa).

Methionine 1 bears the N-acetylmethionine mark. GTP contacts are provided by serine 17, glycine 18, valine 19, glycine 20, lysine 21, serine 22, cysteine 23, tyrosine 33, threonine 34, glutamate 35, serine 36, serine 39, and threonine 40. A Mg(2+)-binding site is contributed by serine 22. The Switch 1 signature appears at 30 to 45 (DDTYTESYISTIGVDF). Mg(2+)-binding residues include threonine 40 and aspartate 63. A switch 2 region; Required for interaction with REP1/CHM region spans residues 64-83 (TAGQERFRTITSSYYRGAHG). Residues 65–80 (AGQERFRTITSSYYRG) carry the Switch 2 motif. GTP contacts are provided by glycine 66, asparagine 121, lysine 122, aspartate 124, serine 151, alanine 152, and lysine 153. Residues 173-201 (MGPGAASGGERPNLKIDSTPVKQAGGGCC) form a disordered region. S-geranylgeranyl cysteine attachment occurs at residues cysteine 200 and cysteine 201. Cysteine 201 bears the Cysteine methyl ester mark.

This sequence belongs to the small GTPase superfamily. Rab family. In terms of assembly, interacts with MICAL1 and MICAL2. Interacts (in GTP-bound form) with MICALCL, MICAL1 and MILCAL3. Interacts with GDI1; the interaction requires the GDP-bound state. Interacts with CHM/REP1; the interaction requires the GDP-bound form and is necessary for prenylation by GGTase II. Interacts with RabGAP TBC1D20. Interacts (in GDP-bound form) with lipid phosphatase MTMR6 (via GRAM domain); the interaction regulates MTMR6 recruitment to the endoplasmic reticulum-Golgi intermediate compartment. Interacts (in GDP-bound form) with lipid phosphatase MTMR7. The cofactor is Mg(2+). In terms of processing, prenylated; by GGTase II, only after interaction of the substrate with Rab escort protein 1 (REP1).

It localises to the cytoplasm. The protein localises to the membrane. Its subcellular location is the preautophagosomal structure membrane. The protein resides in the perinuclear region. It catalyses the reaction GTP + H2O = GDP + phosphate + H(+). Its activity is regulated as follows. Regulated by guanine nucleotide exchange factors (GEFs) which promote the exchange of bound GDP for free GTP. Regulated by GTPase activating proteins (GAPs) including TBC1D20 which increases the GTP hydrolysis activity. Inhibited by GDP dissociation inhibitors (GDIs). In terms of biological role, the small GTPases Rab are key regulators of intracellular membrane trafficking, from the formation of transport vesicles to their fusion with membranes. Rabs cycle between an inactive GDP-bound form and an active GTP-bound form that is able to recruit to membranes different set of downstream effectors directly responsible for vesicle formation, movement, tethering and fusion. Plays a role in the initial events of the autophagic vacuole development which take place at specialized regions of the endoplasmic reticulum. Regulates vesicular transport between the endoplasmic reticulum and successive Golgi compartments. Required to modulate the compacted morphology of the Golgi. Promotes the recruitment of lipid phosphatase MTMR6 to the endoplasmic reticulum-Golgi intermediate compartment. The chain is Ras-related protein Rab-1B (RAB1B) from Bos taurus (Bovine).